The following is a 267-amino-acid chain: Ribosomal RNA small subunit methyltransferase A (267 aa).

S-adenosyl-L-methionine is bound by residues Asn-18, Leu-20, Gly-45, Glu-66, Asp-91, and Asn-112.

The protein belongs to the class I-like SAM-binding methyltransferase superfamily. rRNA adenine N(6)-methyltransferase family. RsmA subfamily.

It is found in the cytoplasm. The catalysed reaction is adenosine(1518)/adenosine(1519) in 16S rRNA + 4 S-adenosyl-L-methionine = N(6)-dimethyladenosine(1518)/N(6)-dimethyladenosine(1519) in 16S rRNA + 4 S-adenosyl-L-homocysteine + 4 H(+). Its function is as follows. Specifically dimethylates two adjacent adenosines (A1518 and A1519) in the loop of a conserved hairpin near the 3'-end of 16S rRNA in the 30S particle. May play a critical role in biogenesis of 30S subunits. This chain is Ribosomal RNA small subunit methyltransferase A, found in Shewanella pealeana (strain ATCC 700345 / ANG-SQ1).